The chain runs to 37 residues: Large ribosomal subunit protein bL36 (37 aa).

Belongs to the bacterial ribosomal protein bL36 family.

This chain is Large ribosomal subunit protein bL36, found in Ureaplasma urealyticum serovar 10 (strain ATCC 33699 / Western).